Reading from the N-terminus, the 582-residue chain is External alternative NAD(P)H-ubiquinone oxidoreductase B4, mitochondrial (582 aa).

A mitochondrion-targeting transit peptide spans 1 to 39 (MSFHSFYQRASSLFKAYPSTSKILLLSTFSGGGGVLVYS). Residue 65–95 (KVVVLGSGWSGYSFLSYLNNPNYDVQVVSPR) participates in FAD binding. 227-263 (LHFVVVGGGPTGVEFSAELHDFLVQDVAKIYPKVQEF) contacts NAD(+). One can recognise an EF-hand domain in the interval 384 to 419 (RVMEDIAAIFNKADKGNTGTLKKKDFNSVVKDICQR). Residues Asp397, Thr401, Thr403, and Asp408 each contribute to the Ca(2+) site. The short motif at 573–582 (FVFGRDSSSI) is the Microbody targeting signal element.

This sequence belongs to the NADH dehydrogenase family. It depends on FAD as a cofactor. As to expression, expressed in seedlings, roots, cotyledons, stems, buds and flowers and, to a lower extent, in stems and leaves.

The protein resides in the mitochondrion inner membrane. It is found in the peroxisome. It catalyses the reaction a quinone + NADH + H(+) = a quinol + NAD(+). The catalysed reaction is a ubiquinone + NADH + H(+) = a ubiquinol + NAD(+). Its activity is regulated as follows. No effect of calcium ions on activity. Alternative NADH-ubiquinone oxidoreductase which catalyzes the oxidation of mitochondrial NADH does not translocate protons across the inner mitochondrial membrane. NAD(P)H dehydrogenase; more efficient on NADH. The protein is External alternative NAD(P)H-ubiquinone oxidoreductase B4, mitochondrial (NDB4) of Arabidopsis thaliana (Mouse-ear cress).